Here is a 651-residue protein sequence, read N- to C-terminus: ATP synthase F(1) complex catalytic subunit beta, mitochondrial (651 aa).

The transit peptide at 1 to 30 (MFVARRLSKNITQISKTAVKTSVRAVPVRG) directs the protein to the mitochondrion. Residues G259, V260, G261, K262, T263, and V264 each coordinate ADP. Position 259 (G259) interacts with ATP. Phosphate-binding residues include G259, V260, G261, K262, and T263. 4 residues coordinate ATP: G261, K262, T263, and V264. T263 is a binding site for Mg(2+). Position 288 (E288) interacts with Mg(2+). R289 is a binding site for ATP.

The protein belongs to the ATPase alpha/beta chains family. In terms of assembly, homotrimer. Component of the ATP synthase complex composed at least of ATP5F1A/subunit alpha, ATP5F1B/subunit beta, ATP5MC1/subunit c (homooctomer), MT-ATP6/subunit a, MT-ATP8/subunit 8, ATP5ME/subunit e, ATP5MF/subunit f, ATP5MG/subunit g, ATP5MK/subunit k, ATP5MJ/subunit j, ATP5F1C/subunit gamma, ATP5F1D/subunit delta, ATP5F1E/subunit epsilon, ATP5PF/subunit F6, ATP5PB/subunit b, ATP5PD/subunit d, ATP5PO/subunit OSCP. ATP synthase complex consists of a soluble F(1) head domain (subunits alpha(3) and beta(3)) - the catalytic core - and a membrane F(0) domain - the membrane proton channel (subunits c, a, 8, e, f, g, k and j). These two domains are linked by a central stalk (subunits gamma, delta, and epsilon) rotating inside the F1 region and a stationary peripheral stalk (subunits F6, b, d, and OSCP).

It localises to the mitochondrion inner membrane. The enzyme catalyses ATP + H2O + 4 H(+)(in) = ADP + phosphate + 5 H(+)(out). Catalytic subunit beta, of the mitochondrial membrane ATP synthase complex (F(1)F(0) ATP synthase or Complex V) that produces ATP from ADP in the presence of a proton gradient across the membrane which is generated by electron transport complexes of the respiratory chain. ATP synthase complex consist of a soluble F(1) head domain - the catalytic core - and a membrane F(1) domain - the membrane proton channel. These two domains are linked by a central stalk rotating inside the F(1) region and a stationary peripheral stalk. During catalysis, ATP synthesis in the catalytic domain of F(1) is coupled via a rotary mechanism of the central stalk subunits to proton translocation. In vivo, can only synthesize ATP although its ATP hydrolase activity can be activated artificially in vitro. With the subunit alpha (ATP5F1A), forms the catalytic core in the F(1) domain. In Dictyostelium discoideum (Social amoeba), this protein is ATP synthase F(1) complex catalytic subunit beta, mitochondrial.